The chain runs to 340 residues: tRNA dimethylallyltransferase (340 aa).

Residues 1–25 (MDQNRSPNGRDCREPPSPSSTARPG) form a disordered region. Residue 31–38 (GPTATGKS) participates in ATP binding. Residue 33 to 38 (TATGKS) participates in substrate binding. The interaction with substrate tRNA stretch occupies residues 56 to 59 (DSRQ).

The protein belongs to the IPP transferase family. In terms of assembly, monomer. The cofactor is Mg(2+).

The catalysed reaction is adenosine(37) in tRNA + dimethylallyl diphosphate = N(6)-dimethylallyladenosine(37) in tRNA + diphosphate. In terms of biological role, catalyzes the transfer of a dimethylallyl group onto the adenine at position 37 in tRNAs that read codons beginning with uridine, leading to the formation of N6-(dimethylallyl)adenosine (i(6)A). This is tRNA dimethylallyltransferase from Synechococcus sp. (strain JA-3-3Ab) (Cyanobacteria bacterium Yellowstone A-Prime).